The following is a 523-amino-acid chain: NAD(P)H-quinone oxidoreductase subunit 2 (523 aa).

The next 13 helical transmembrane spans lie at 30 to 50, 57 to 77, 94 to 114, 128 to 148, 182 to 202, 223 to 243, 255 to 275, 291 to 311, 317 to 337, 345 to 365, 389 to 409, 424 to 444, and 477 to 497; these read VGPE…DLAG, WVPP…ALQW, LAIA…LISW, AAIL…TDLV, LLVG…LYGL, AALA…AVPF, PTPV…ALAL, LLFT…ALAQ, MLAY…VCGT, VLYM…IILF, LGLS…GFFG, VLVV…IGVI, and VALV…NPLF.

This sequence belongs to the complex I subunit 2 family. NDH-1 can be composed of about 15 different subunits; different subcomplexes with different compositions have been identified which probably have different functions.

It is found in the cellular thylakoid membrane. It carries out the reaction a plastoquinone + NADH + (n+1) H(+)(in) = a plastoquinol + NAD(+) + n H(+)(out). The enzyme catalyses a plastoquinone + NADPH + (n+1) H(+)(in) = a plastoquinol + NADP(+) + n H(+)(out). NDH-1 shuttles electrons from an unknown electron donor, via FMN and iron-sulfur (Fe-S) centers, to quinones in the respiratory and/or the photosynthetic chain. The immediate electron acceptor for the enzyme in this species is believed to be plastoquinone. Couples the redox reaction to proton translocation, and thus conserves the redox energy in a proton gradient. Cyanobacterial NDH-1 also plays a role in inorganic carbon-concentration. The polypeptide is NAD(P)H-quinone oxidoreductase subunit 2 (Synechococcus sp. (strain CC9311)).